The following is a 101-amino-acid chain: Large ribosomal subunit protein uL23 (101 aa).

The protein belongs to the universal ribosomal protein uL23 family. Part of the 50S ribosomal subunit. Contacts protein L29, and trigger factor when it is bound to the ribosome.

One of the early assembly proteins it binds 23S rRNA. One of the proteins that surrounds the polypeptide exit tunnel on the outside of the ribosome. Forms the main docking site for trigger factor binding to the ribosome. The polypeptide is Large ribosomal subunit protein uL23 (Rhodococcus jostii (strain RHA1)).